The following is a 35-amino-acid chain: Natriuretic peptide TNPb (35 aa).

Cys-9 and Cys-25 form a disulfide bridge.

In terms of tissue distribution, expressed by the venom gland.

The protein resides in the secreted. Functionally, snake venom natriuretic peptide that exhibits vasoactive and probable hypotensive activity. Is only weakly active on natriuretic peptide receptor-C (NPR3). Stimulates cGMP production through the natriuretic peptide receptor 1 (NPR1) with moderate potencies for the rat NPR1 (EC(50)=1200 nM), and very weak potencies over human NPR1 (30% activation at 10 uM). In vivo, does not impact systolic and diastolic blood pressure, as well as heart rate, when intravenously injected in conscious rabbits. Does not affect the bradycardia due to cardiac afferent stimulation (Bezold-Jarisch reflex). In Oxyuranus microlepidotus (Inland taipan), this protein is Natriuretic peptide TNPb.